The sequence spans 695 residues: Elongation factor G 1 (695 aa).

The tr-type G domain occupies 6 to 284 (KKVRNIGISA…VTRYLPCPAD (279 aa)). GTP-binding positions include 15-22 (AHIDSGKT), 82-86 (DTPGH), and 136-139 (NKCD).

It belongs to the TRAFAC class translation factor GTPase superfamily. Classic translation factor GTPase family. EF-G/EF-2 subfamily.

It is found in the cytoplasm. Its function is as follows. Catalyzes the GTP-dependent ribosomal translocation step during translation elongation. During this step, the ribosome changes from the pre-translocational (PRE) to the post-translocational (POST) state as the newly formed A-site-bound peptidyl-tRNA and P-site-bound deacylated tRNA move to the P and E sites, respectively. Catalyzes the coordinated movement of the two tRNA molecules, the mRNA and conformational changes in the ribosome. This is Elongation factor G 1 from Syntrophus aciditrophicus (strain SB).